The chain runs to 190 residues: Cytoglobin (190 aa).

Residues 18–167 (ELSEAERKAV…IYSHVTAAYK (150 aa)) form the Globin domain. The cysteines at positions 38 and 83 are disulfide-linked. Residues histidine 81 and histidine 113 each coordinate heme b.

The protein belongs to the globin family. As to quaternary structure, monomeric. Homodimer; disulfide-linked in vitro. Also homooligomeric in vitro. In terms of processing, the formation of an intramolecular disulfide bond between cysteines Cys-38 and Cys-83 specifically enhances the nitrite reductase activity. Widely expressed. Highest expression in heart, stomach, bladder and small intestine.

It localises to the cytoplasm. It is found in the nucleus. The catalysed reaction is Fe(II)-heme b-[protein] + nitric oxide + O2 = Fe(III)-heme b-[protein] + nitrate. It catalyses the reaction Fe(III)-heme b-[protein] + nitric oxide + H2O = Fe(II)-heme b-[protein] + nitrite + 2 H(+). The enzyme catalyses 2 superoxide + 2 H(+) = H2O2 + O2. It carries out the reaction H2O2 + AH2 = A + 2 H2O. With respect to regulation, the nitric oxide dioxygenase activity is activated by a reducing system composed of cytochrome b5, its upstream reductase CYB5R3 and NADH. Functionally, probable multifunctional globin with a hexacoordinated heme iron required for the catalysis of various reactions depending on redox condition of the cell as well as oxygen availability. Has a nitric oxide dioxygenase (NOD) activity and is most probably involved in cell-mediated and oxygen-dependent nitric oxide consumption. By scavenging this second messenger may regulate several biological processes including endothelium-mediated vasodilation and vascular tone. Under normoxic conditions functions as a nitric oxide dioxygenase (NOD) but under hypoxic conditions the globin may switch its function to that of a nitrite (NO2) reductase (NiR), generating nitric oxide. Could also have peroxidase and superoxide dismutase activities, detoxifying reactive oxygen species and protecting cells against oxidative stress. Also binds dioxygen with low affinity and could function as an oxygen sensor but has probably no function as a respiratory oxygen carrier. This chain is Cytoglobin, found in Homo sapiens (Human).